Reading from the N-terminus, the 854-residue chain is Protein SEY1 homolog (854 aa).

At 1 to 724 (MAAFSGETAV…LRNIESGKQS (724 aa)) the chain is on the cytoplasmic side. One can recognise a GB1/RHD3-type G domain in the interval 49–291 (GVNYHVVGVF…NSNFLFSNCS (243 aa)). Residue 59-66 (GGQSSGKS) participates in GTP binding. Positions 336–386 (KHAAIEEFKEVCEEYTKKIQRGDVIPQFTRALEETIERLLKNFSDQTKLYK) form a coiled coil. A helical membrane pass occupies residues 725 to 745 (LPPWVLPVMLLLGWNELYYLL). Residues 746–748 (TSP) are Lumenal-facing. Residues 749-769 (ILLIAIIVIAVLFFKTFLKSQ) form a helical membrane-spanning segment. At 770 to 854 (LEVLEEKCPV…CRESRDKGED (85 aa)) the chain is on the cytoplasmic side. The disordered stretch occupies residues 808-854 (GGGGAQFRDPTQATSVSGASAGVSSESSSAASPRRRVCRESRDKGED). Residues 822 to 839 (SVSGASAGVSSESSSAAS) show a composition bias toward low complexity. A compositionally biased stretch (basic and acidic residues) spans 845–854 (CRESRDKGED).

This sequence belongs to the TRAFAC class dynamin-like GTPase superfamily. GB1/RHD3 GTPase family. RHD3 subfamily.

It localises to the endoplasmic reticulum membrane. In terms of biological role, probable GTP-binding protein that may be involved in cell development. In Trypanosoma brucei brucei (strain 927/4 GUTat10.1), this protein is Protein SEY1 homolog.